Here is a 267-residue protein sequence, read N- to C-terminus: Digeranylgeranylglyceryl phosphate synthase (267 aa).

Helical transmembrane passes span Ala-10–Leu-30, Leu-33–Ile-53, Ala-80–Asn-100, Leu-104–Leu-121, Thr-139–Leu-159, Val-198–Ile-218, and Gln-247–Ile-267.

Belongs to the UbiA prenyltransferase family. DGGGP synthase subfamily. It depends on Mg(2+) as a cofactor.

It is found in the cell membrane. It catalyses the reaction sn-3-O-(geranylgeranyl)glycerol 1-phosphate + (2E,6E,10E)-geranylgeranyl diphosphate = 2,3-bis-O-(geranylgeranyl)-sn-glycerol 1-phosphate + diphosphate. Its pathway is membrane lipid metabolism; glycerophospholipid metabolism. Prenyltransferase that catalyzes the transfer of the geranylgeranyl moiety of geranylgeranyl diphosphate (GGPP) to the C2 hydroxyl of (S)-3-O-geranylgeranylglyceryl phosphate (GGGP). This reaction is the second ether-bond-formation step in the biosynthesis of archaeal membrane lipids. The sequence is that of Digeranylgeranylglyceryl phosphate synthase from Methanothrix thermoacetophila (strain DSM 6194 / JCM 14653 / NBRC 101360 / PT) (Methanosaeta thermophila).